The sequence spans 367 residues: Glutamate 5-kinase (367 aa).

Position 17 (Lys17) interacts with ATP. Positions 57, 144, and 156 each coordinate substrate. ATP is bound by residues 176-177 (SD) and 217-223 (TGGMTSK). Residues 279-357 (AGALTLDEGA…SELPGELRRP (79 aa)) enclose the PUA domain.

The protein belongs to the glutamate 5-kinase family.

It is found in the cytoplasm. It carries out the reaction L-glutamate + ATP = L-glutamyl 5-phosphate + ADP. It functions in the pathway amino-acid biosynthesis; L-proline biosynthesis; L-glutamate 5-semialdehyde from L-glutamate: step 1/2. In terms of biological role, catalyzes the transfer of a phosphate group to glutamate to form L-glutamate 5-phosphate. The sequence is that of Glutamate 5-kinase from Mycolicibacterium paratuberculosis (strain ATCC BAA-968 / K-10) (Mycobacterium paratuberculosis).